The sequence spans 697 residues: Elongation factor G (697 aa).

The tr-type G domain occupies 10-285 (AKTRNIGIMA…GVIDYLPSPL (276 aa)). GTP-binding positions include 19–26 (AHIDAGKT), 83–87 (DTPGH), and 137–140 (NKMD).

This sequence belongs to the TRAFAC class translation factor GTPase superfamily. Classic translation factor GTPase family. EF-G/EF-2 subfamily.

The protein resides in the cytoplasm. Catalyzes the GTP-dependent ribosomal translocation step during translation elongation. During this step, the ribosome changes from the pre-translocational (PRE) to the post-translocational (POST) state as the newly formed A-site-bound peptidyl-tRNA and P-site-bound deacylated tRNA move to the P and E sites, respectively. Catalyzes the coordinated movement of the two tRNA molecules, the mRNA and conformational changes in the ribosome. In Lactobacillus acidophilus (strain ATCC 700396 / NCK56 / N2 / NCFM), this protein is Elongation factor G.